We begin with the raw amino-acid sequence, 526 residues long: ATP synthase subunit alpha (526 aa).

171–178 (GDRQTGKT) provides a ligand contact to ATP.

This sequence belongs to the ATPase alpha/beta chains family. F-type ATPases have 2 components, CF(1) - the catalytic core - and CF(0) - the membrane proton channel. CF(1) has five subunits: alpha(3), beta(3), gamma(1), delta(1), epsilon(1). CF(0) has four main subunits: a(1), b(1), b'(1) and c(9-12).

The protein resides in the cell inner membrane. The catalysed reaction is ATP + H2O + 4 H(+)(in) = ADP + phosphate + 5 H(+)(out). Its function is as follows. Produces ATP from ADP in the presence of a proton gradient across the membrane. The alpha chain is a regulatory subunit. This is ATP synthase subunit alpha from Chlorobaculum tepidum (strain ATCC 49652 / DSM 12025 / NBRC 103806 / TLS) (Chlorobium tepidum).